The following is a 210-amino-acid chain: Orotate phosphoribosyltransferase (210 aa).

Residues Arg-94, Lys-98, His-100, and 120–128 (EDLISTGGS) contribute to the 5-phospho-alpha-D-ribose 1-diphosphate site. Ser-124 serves as a coordination point for orotate.

This sequence belongs to the purine/pyrimidine phosphoribosyltransferase family. PyrE subfamily. As to quaternary structure, homodimer. Mg(2+) serves as cofactor.

It catalyses the reaction orotidine 5'-phosphate + diphosphate = orotate + 5-phospho-alpha-D-ribose 1-diphosphate. The protein operates within pyrimidine metabolism; UMP biosynthesis via de novo pathway; UMP from orotate: step 1/2. Its function is as follows. Catalyzes the transfer of a ribosyl phosphate group from 5-phosphoribose 1-diphosphate to orotate, leading to the formation of orotidine monophosphate (OMP). This is Orotate phosphoribosyltransferase from Halalkalibacterium halodurans (strain ATCC BAA-125 / DSM 18197 / FERM 7344 / JCM 9153 / C-125) (Bacillus halodurans).